The primary structure comprises 912 residues: Microtubule-associated protein 10 (912 aa).

Disordered stretches follow at residues 31–50 (VAEE…RPSR), 209–239 (KSVE…ADKP), 254–296 (GRAF…QEGT), 335–366 (ASEE…SATG), 443–469 (SPES…NEKS), and 730–859 (RACD…VSSY). A compositionally biased stretch (polar residues) spans 211 to 229 (VEVSPQTWQENQQLQQPDS). Basic and acidic residues predominate over residues 254-263 (GRAFHSKADS). A compositionally biased stretch (polar residues) spans 266-295 (TDSMENGKTNSDMCSKGSSERSVSPPNQEG). Residues 347–362 (ENVNPPTHTNPPEHTN) show a composition bias toward low complexity. Positions 452-468 (CKSESKKDKLSVGENEK) are enriched in basic and acidic residues. The span at 735–768 (SPGTENPKNSQHTSTSSETRLSIRKNSSAKSSIL) shows a compositional bias: polar residues. Residues 796–807 (EASSSDFSSSQW) show a composition bias toward low complexity. A compositionally biased stretch (polar residues) spans 841-859 (GCKSSEKSQSPRTSQVSSY).

Interacts (via middle region) with microtubules.

The protein resides in the cytoplasm. Its subcellular location is the cytoskeleton. It localises to the spindle pole. It is found in the microtubule organizing center. The protein localises to the centrosome. The protein resides in the midbody. Microtubule-associated protein (MAP) that plays a role in the regulation of cell division; promotes microtubule stability and participates in the organization of the spindle midzone and normal progress of cytokinesis. This is Microtubule-associated protein 10 (MAP10) from Bos taurus (Bovine).